Here is a 214-residue protein sequence, read N- to C-terminus: Probable nicotinate-nucleotide adenylyltransferase (214 aa).

It belongs to the NadD family.

The catalysed reaction is nicotinate beta-D-ribonucleotide + ATP + H(+) = deamido-NAD(+) + diphosphate. It participates in cofactor biosynthesis; NAD(+) biosynthesis; deamido-NAD(+) from nicotinate D-ribonucleotide: step 1/1. Its function is as follows. Catalyzes the reversible adenylation of nicotinate mononucleotide (NaMN) to nicotinic acid adenine dinucleotide (NaAD). The chain is Probable nicotinate-nucleotide adenylyltransferase from Rubrobacter xylanophilus (strain DSM 9941 / JCM 11954 / NBRC 16129 / PRD-1).